The primary structure comprises 181 residues: HGPRTase-like protein 2 (181 aa).

Belongs to the purine/pyrimidine phosphoribosyltransferase family. Archaeal HPRT subfamily.

In terms of biological role, may catalyze a purine salvage reaction, the substrate is unknown. The protein is HGPRTase-like protein 2 of Natrialba magadii (strain ATCC 43099 / DSM 3394 / CCM 3739 / CIP 104546 / IAM 13178 / JCM 8861 / NBRC 102185 / NCIMB 2190 / MS3) (Natronobacterium magadii).